Here is a 447-residue protein sequence, read N- to C-terminus: Protein cortex (447 aa).

WD repeat units lie at residues 108–148 (TYSY…IGHG), 149–188 (FAEY…KIMS), 198–237 (NMNC…ISWR), 281–325 (DSDW…VRDT), 344–380 (GELV…DQWG), and 384–423 (SGLD…NKMK). The short motif at 384-395 (SGLDRVRTMIFS) is the D-box element.

This sequence belongs to the WD repeat CORT family.

Its subcellular location is the cytoplasm. Its function is as follows. Controls wing pigmentation patterning by regulating scale cell development, thereby playing a key role in mimicry and crypsis. Probably acts as an activator of the anaphase promoting complex/cyclosome (APC/C) that promotes the ubiquitin ligase activity and substrate specificity of the APC/C. This Heliconius melpomene (Postman butterfly) protein is Protein cortex.